A 174-amino-acid polypeptide reads, in one-letter code: Peptide methionine sulfoxide reductase MsrA (174 aa).

The active site involves Cys11.

Belongs to the MsrA Met sulfoxide reductase family.

It catalyses the reaction L-methionyl-[protein] + [thioredoxin]-disulfide + H2O = L-methionyl-(S)-S-oxide-[protein] + [thioredoxin]-dithiol. It carries out the reaction [thioredoxin]-disulfide + L-methionine + H2O = L-methionine (S)-S-oxide + [thioredoxin]-dithiol. Functionally, has an important function as a repair enzyme for proteins that have been inactivated by oxidation. Catalyzes the reversible oxidation-reduction of methionine sulfoxide in proteins to methionine. This chain is Peptide methionine sulfoxide reductase MsrA, found in Haloquadratum walsbyi (strain DSM 16790 / HBSQ001).